Consider the following 197-residue polypeptide: Rac-like GTP-binding protein RHO1 (197 aa).

Residue 13 to 20 (GDGAVGKT) coordinates GTP. Positions 35-43 (YVPTVFDNF) match the Effector region motif. GTP contacts are provided by residues 60–64 (DTAGQ) and 118–121 (TKLD). At cysteine 194 the chain carries Cysteine methyl ester. The S-geranylgeranyl cysteine moiety is linked to residue cysteine 194. Residues 195-197 (SIL) constitute a propeptide, removed in mature form.

It belongs to the small GTPase superfamily. Rho family.

It localises to the cytoplasm. The protein localises to the membrane. In terms of biological role, inactive GDP-bound Rho GTPases reside in the cytosol, are found in a complex with Rho GDP-dissociation inhibitors (Rho GDIs), and are released from the GDI protein in order to translocate to membranes upon activation. The polypeptide is Rac-like GTP-binding protein RHO1 (RHO1) (Beta vulgaris (Sugar beet)).